Reading from the N-terminus, the 454-residue chain is Ribosomal protein uS12 methylthiotransferase RimO (454 aa).

Residues 19 to 129 (AKVGFVSLGC…VLAQVHEHVA (111 aa)) form the MTTase N-terminal domain. [4Fe-4S] cluster contacts are provided by Cys-28, Cys-64, Cys-93, Cys-161, Cys-165, and Cys-168. The 238-residue stretch at 147–384 (LTPKHYAYLK…MAVQAKISSD (238 aa)) folds into the Radical SAM core domain. The 67-residue stretch at 387-453 (QVRIGQEYLI…EHDVWGVRVE (67 aa)) folds into the TRAM domain.

Belongs to the methylthiotransferase family. RimO subfamily. The cofactor is [4Fe-4S] cluster.

The protein localises to the cytoplasm. The enzyme catalyses L-aspartate(89)-[ribosomal protein uS12]-hydrogen + (sulfur carrier)-SH + AH2 + 2 S-adenosyl-L-methionine = 3-methylsulfanyl-L-aspartate(89)-[ribosomal protein uS12]-hydrogen + (sulfur carrier)-H + 5'-deoxyadenosine + L-methionine + A + S-adenosyl-L-homocysteine + 2 H(+). In terms of biological role, catalyzes the methylthiolation of an aspartic acid residue of ribosomal protein uS12. This is Ribosomal protein uS12 methylthiotransferase RimO from Colwellia psychrerythraea (strain 34H / ATCC BAA-681) (Vibrio psychroerythus).